The chain runs to 236 residues: Small ribosomal subunit protein uS2c (236 aa).

The protein belongs to the universal ribosomal protein uS2 family.

The protein localises to the plastid. It is found in the chloroplast. In Ceratophyllum demersum (Rigid hornwort), this protein is Small ribosomal subunit protein uS2c (rps2).